The sequence spans 229 residues: Putative N-acetylmannosamine-6-phosphate 2-epimerase (229 aa).

Belongs to the NanE family.

The enzyme catalyses an N-acyl-D-glucosamine 6-phosphate = an N-acyl-D-mannosamine 6-phosphate. Its pathway is amino-sugar metabolism; N-acetylneuraminate degradation; D-fructose 6-phosphate from N-acetylneuraminate: step 3/5. Functionally, converts N-acetylmannosamine-6-phosphate (ManNAc-6-P) to N-acetylglucosamine-6-phosphate (GlcNAc-6-P). In Haemophilus ducreyi (strain 35000HP / ATCC 700724), this protein is Putative N-acetylmannosamine-6-phosphate 2-epimerase.